The following is a 193-amino-acid chain: Holliday junction branch migration complex subunit RuvA (193 aa).

The segment at 1 to 64 is domain I; sequence MIGRIAGTLL…EDAHLLYGFL (64 aa). Positions 65–139 are domain II; that stretch reads TPQERSTFRE…GKLGADLGPL (75 aa). The interval 139–143 is flexible linker; that stretch reads LAGAA. The tract at residues 144–193 is domain III; sequence SPSDHAADILNALLALGYSEKEALAAIKNVPAGTGVSEGIKLSLKALSKA.

The protein belongs to the RuvA family. In terms of assembly, homotetramer. Forms an RuvA(8)-RuvB(12)-Holliday junction (HJ) complex. HJ DNA is sandwiched between 2 RuvA tetramers; dsDNA enters through RuvA and exits via RuvB. An RuvB hexamer assembles on each DNA strand where it exits the tetramer. Each RuvB hexamer is contacted by two RuvA subunits (via domain III) on 2 adjacent RuvB subunits; this complex drives branch migration. In the full resolvosome a probable DNA-RuvA(4)-RuvB(12)-RuvC(2) complex forms which resolves the HJ.

The protein resides in the cytoplasm. Its function is as follows. The RuvA-RuvB-RuvC complex processes Holliday junction (HJ) DNA during genetic recombination and DNA repair, while the RuvA-RuvB complex plays an important role in the rescue of blocked DNA replication forks via replication fork reversal (RFR). RuvA specifically binds to HJ cruciform DNA, conferring on it an open structure. The RuvB hexamer acts as an ATP-dependent pump, pulling dsDNA into and through the RuvAB complex. HJ branch migration allows RuvC to scan DNA until it finds its consensus sequence, where it cleaves and resolves the cruciform DNA. This is Holliday junction branch migration complex subunit RuvA from Burkholderia thailandensis (strain ATCC 700388 / DSM 13276 / CCUG 48851 / CIP 106301 / E264).